The following is a 150-amino-acid chain: MSKRKTKEPKVENVTLGPAVREGEQVFGVVHVFASFNDTFIHVTDLSGRETLVRITGGMKVKADRDESSPYAAMLAAQDVAQRCKELGITAIHVKLRATGGNKTKTPGPGAQSALRALARSGMKIGRIEDVTPIPTDSTRRKGGRRGRRL.

Belongs to the universal ribosomal protein uS11 family.

It is found in the cytoplasm. The chain is Small ribosomal subunit protein uS11x (RPS14C) from Arabidopsis thaliana (Mouse-ear cress).